The primary structure comprises 212 residues: Transcription antitermination protein NusB (212 aa).

2 disordered regions span residues 1 to 34 and 169 to 212; these read MSDE…SKSN and EHDR…QAAG. The span at 178-212 shows a compositional bias: low complexity; sequence APAQPAAKADTATDAVADAATDAAAADDAADQAAG.

It belongs to the NusB family.

Involved in transcription antitermination. Required for transcription of ribosomal RNA (rRNA) genes. Binds specifically to the boxA antiterminator sequence of the ribosomal RNA (rrn) operons. The polypeptide is Transcription antitermination protein NusB (Delftia acidovorans (strain DSM 14801 / SPH-1)).